The primary structure comprises 246 residues: Bis(5'-nucleosyl)-tetraphosphatase PrpE [asymmetrical] (246 aa).

It belongs to the PrpE family. It depends on Ni(2+) as a cofactor.

The enzyme catalyses P(1),P(4)-bis(5'-guanosyl) tetraphosphate + H2O = GMP + GTP + 2 H(+). Its function is as follows. Asymmetrically hydrolyzes Ap4p to yield AMP and ATP. This chain is Bis(5'-nucleosyl)-tetraphosphatase PrpE [asymmetrical], found in Halalkalibacterium halodurans (strain ATCC BAA-125 / DSM 18197 / FERM 7344 / JCM 9153 / C-125) (Bacillus halodurans).